The primary structure comprises 365 residues: Protein RecA (365 aa).

76–83 (GPESSGKT) contributes to the ATP binding site. The disordered stretch occupies residues 346–365 (DVPGSERDGDEDAGDMEASA). Acidic residues predominate over residues 353-365 (DGDEDAGDMEASA).

It belongs to the RecA family.

The protein localises to the cytoplasm. Functionally, can catalyze the hydrolysis of ATP in the presence of single-stranded DNA, the ATP-dependent uptake of single-stranded DNA by duplex DNA, and the ATP-dependent hybridization of homologous single-stranded DNAs. It interacts with LexA causing its activation and leading to its autocatalytic cleavage. The protein is Protein RecA of Parvibaculum lavamentivorans (strain DS-1 / DSM 13023 / NCIMB 13966).